A 602-amino-acid polypeptide reads, in one-letter code: Myotubularin (602 aa).

Over residues 1 to 16 (MATSSTPKYNSNSLEN) the composition is skewed to polar residues. The interval 1-33 (MATSSTPKYNSNSLENSVRRSPGDGINHEQNDE) is disordered. Residues 17–33 (SVRRSPGDGINHEQNDE) are compositionally biased toward basic and acidic residues. Positions 28 to 96 (HEQNDEISRL…GVIARIEKMG (69 aa)) constitute a GRAM domain. Residues 162-537 (GWAVYDAMTE…RHLELWVNYY (376 aa)) enclose the Myotubularin phosphatase domain. Asn-287, Asn-312, and Ile-313 together coordinate a 1,2-diacyl-sn-glycero-3-phospho-(1D-myo-inositol-3,5-bisphosphate). 3 residues coordinate a 1,2-diacyl-sn-glycero-3-phospho-(1D-myo-inositol-3-phosphate): Asn-287, Asn-312, and Ile-313. The Phosphocysteine intermediate role is filled by Cys-374. Positions 375, 376, 377, 378, 379, 380, 416, and 420 each coordinate a 1,2-diacyl-sn-glycero-3-phospho-(1D-myo-inositol-3,5-bisphosphate). 6 residues coordinate a 1,2-diacyl-sn-glycero-3-phospho-(1D-myo-inositol-3-phosphate): Ser-375, Asp-376, Gly-377, Trp-378, Asp-379, and Arg-380. Arg-420 lines the a 1,2-diacyl-sn-glycero-3-phospho-(1D-myo-inositol-3-phosphate) pocket. A disordered region spans residues 577 to 602 (NSPKINRSTTSPSSPSQMMPQVQTPF). The segment covering 584 to 602 (STTSPSSPSQMMPQVQTPF) has biased composition (low complexity).

This sequence belongs to the protein-tyrosine phosphatase family. Non-receptor class myotubularin subfamily.

The protein localises to the cytoplasm. The protein resides in the cell membrane. It is found in the cell projection. Its subcellular location is the filopodium. It localises to the ruffle. The protein localises to the late endosome. The protein resides in the myofibril. It is found in the sarcomere. It carries out the reaction a 1,2-diacyl-sn-glycero-3-phospho-(1D-myo-inositol-3-phosphate) + H2O = a 1,2-diacyl-sn-glycero-3-phospho-(1D-myo-inositol) + phosphate. The catalysed reaction is a 1,2-diacyl-sn-glycero-3-phospho-(1D-myo-inositol-3,5-bisphosphate) + H2O = a 1,2-diacyl-sn-glycero-3-phospho-(1D-myo-inositol-5-phosphate) + phosphate. The enzyme catalyses 1,2-dioctanoyl-sn-glycero-3-phospho-(1-D-myo-inositol-3-phosphate) + H2O = 1,2-dioctanoyl-sn-glycero-3-phospho-(1D-myo-inositol) + phosphate. It catalyses the reaction 1,2-dioctanoyl-sn-glycero-3-phospho-(1D-myo-inositol-3,5-bisphosphate) + H2O = 1,2-dioctanoyl-sn-glycero-3-phospho-(1D-myo-inositol-5-phosphate) + phosphate. It carries out the reaction 1,2-dihexadecanoyl-sn-glycero-3-phospho-(1D-myo-inositol-3,5-phosphate) + H2O = 1,2-dihexadecanoyl-sn-glycero-3-phospho-(1D-myo-inositol-5-phosphate) + phosphate. Functionally, lipid phosphatase which dephosphorylates phosphatidylinositol 3-monophosphate (PI3P) and phosphatidylinositol 3,5-bisphosphate (PI(3,5)P2). The protein is Myotubularin (mtm1) of Xenopus laevis (African clawed frog).